Consider the following 980-residue polypeptide: MREKLSLWAIFCLVVAFLPSQTESVAVMSVDLGSEWMKVAIVKPGVPMEIVLNKESRRKTPVAVCLKENERLFGDGALGVAVKNPKVVYRFLQSILGKTADNPQVAEYQKHFPEHQLQKDEKRGTVYFKFSEEMQYTPEELLGMILNYSRTLAQDFAEQPIKDAVITVPAYFNQAERRAVLQAAHIAGLKVLQLINDNTAVALNYGVFRRKDINSTAQNIMFYDMGSGSTTATIVTYQTVKTKESGTQPQLQIRGVGFDRTLGGFEMELRLRDHLAKLFNEQKKSKKDVRDNLRAMAKLLKEAQRLKTVLSANAEHTAQIEGLMDDIDFKAKVTRSEFEALCEDLFDRVPGPVKQALAAAEMSMDEIEQVILVGGATRVPKVQDVLLKSVGKEELSKNINADEAAAMGAVYQAAALSKAFKVKPFLVRDAAVFPIQVEFSRETEEEDGVKSLKHNKRILFQRMAPYPQRKVITFNRYIDDFVFYINYGDLSFLSEQDMKVFGSQNLTTVKLSGVGSSFKKHSDAESKGIKAHFNMDESGVLILDRVESVFETIVEEKEEESTLTKLGNTISSLFGGGSSEPSANVTEPVTDEEEVTPEAGKEQDQPEKQEETVQEKPETEEGKEAEPQAEEQKEDKEKAENQGETESEKTEKPEEKTTDEEKEADMKPKLQKKSKISADIAVELEVNDVLDPSAEDMEGSKKKLQDLTDRDLEKQEREKTLNSLEAFIFETQDKLYQDEYQAVVTEEEKEQISGRLSVASSWMDEEGYRAGTKLLKEKLSELKKLCKGMFFRVEERKKWPDRLAALDSMLNHSNIFLKSARLIPESDQIFTDVELKTLEKVINETITWKNETVAEQEKLSPTVKPVLLSKDIEAKLSLLDREVNYLLNKAKFAKPKPKDKAKDKNSTSESSKANSTDDAEKVIPPKTEDGAEKVKPAEEPPVVEEKAEETILELNPAENTDDKTESTESSKSENHIEDEL.

The signal sequence occupies residues 1–24 (MREKLSLWAIFCLVVAFLPSQTES). 2 disordered regions span residues 558 to 682 (EEES…DIAV) and 894 to 980 (KPKP…EDEL). 2 stretches are compositionally biased toward basic and acidic residues: residues 599 to 656 (AGKE…PEEK) and 896 to 906 (KPKDKAKDKNS). Residues 907–916 (TSESSKANST) show a composition bias toward polar residues. Composition is skewed to basic and acidic residues over residues 918–949 (DAEKVIPPKTEDGAEKVKPAEEPPVVEEKAEE) and 960–980 (TDDKTESTESSKSENHIEDEL). The short motif at 977-980 (EDEL) is the Prevents secretion from ER element.

It belongs to the heat shock protein 70 family.

Its subcellular location is the endoplasmic reticulum lumen. Has a pivotal role in cytoprotective cellular mechanisms triggered by oxygen deprivation. May play a role as a molecular chaperone and participate in protein folding. This chain is Hypoxia up-regulated protein 1 (hyou1), found in Danio rerio (Zebrafish).